A 506-amino-acid chain; its full sequence is NAD(P)H-quinone oxidoreductase subunit 2 (506 aa).

13 helical membrane-spanning segments follow: residues 14-34 (AIIP…VDLA), 42-62 (WAPI…ALQW), 79-99 (LAIA…LISW), 108-128 (PIGE…LLCG), 132-152 (LISV…LSGY), 167-187 (LLVG…LYGL), 206-226 (FITS…IAAV), 240-260 (PTPV…AFAI), 276-296 (LLFT…ALAQ), 302-322 (MLAY…VSGT), 330-350 (VLYL…VILF), 374-394 (LGLS…GFFG), and 409-429 (LLVI…ISVI).

Belongs to the complex I subunit 2 family. As to quaternary structure, NDH-1 can be composed of about 15 different subunits; different subcomplexes with different compositions have been identified which probably have different functions.

It is found in the cellular thylakoid membrane. The catalysed reaction is a plastoquinone + NADH + (n+1) H(+)(in) = a plastoquinol + NAD(+) + n H(+)(out). It catalyses the reaction a plastoquinone + NADPH + (n+1) H(+)(in) = a plastoquinol + NADP(+) + n H(+)(out). Functionally, NDH-1 shuttles electrons from an unknown electron donor, via FMN and iron-sulfur (Fe-S) centers, to quinones in the respiratory and/or the photosynthetic chain. The immediate electron acceptor for the enzyme in this species is believed to be plastoquinone. Couples the redox reaction to proton translocation, and thus conserves the redox energy in a proton gradient. Cyanobacterial NDH-1 also plays a role in inorganic carbon-concentration. This chain is NAD(P)H-quinone oxidoreductase subunit 2, found in Prochlorococcus marinus (strain AS9601).